Reading from the N-terminus, the 230-residue chain is Sugar fermentation stimulation protein homolog (230 aa).

The protein belongs to the SfsA family.

This Clostridium botulinum (strain Alaska E43 / Type E3) protein is Sugar fermentation stimulation protein homolog.